A 465-amino-acid chain; its full sequence is MAELPLAAGLLDLRPCKLAPPPPPPLPVSPSPRHHRRPHSTATACRAAPDLHSSTELADGSIVFRFARPRDDDDEEQQQRRADAVAPEAAAVVESGLDGDAAAAAEPEARDGGGEGEVTATATGLDAEEVVASGGAEATATSGLEDAGEEASDGSTARDSDTDVDTESSASTAADDDQPAEFAVPPPPAEEVCNKVDWEKDTSEVKNTDRMVPVASSTLVLASGAAILPHPSKAATGGEDAYFIACDGWFGVADGVGQWSFEGINAGLYARELMDGCKKFIMENQGAADIKPEQVLSKAADEAHSPGSSTVLVAHFDGQFLNASNIGDSGFLVIRNGEVYQKSKPMVYGFNFPLQIEKGDNPLKLVQNYTIELEDGDVIVTASDGLFDNVYEQEVATMVSKSLQADLKPTEIAEHLAAKAQEVGRSAAGSTPFSDAALAVGYLGFSGGKLDDIAVVVSIVRKSEI.

Disordered stretches follow at residues Arg-14–Ala-47, Arg-68–Thr-119, and Ser-133–Glu-191. The segment covering Leu-18–Pro-30 has biased composition (pro residues). 2 stretches are compositionally biased toward low complexity: residues Ala-84 to Glu-106 and Ser-133 to Gly-143. Residues Ala-222–Val-460 form the PPM-type phosphatase domain. Mn(2+)-binding residues include Asp-254, Gly-255, Asp-384, and Asp-451.

Belongs to the PP2C family. The cofactor is Mg(2+). It depends on Mn(2+) as a cofactor.

The catalysed reaction is O-phospho-L-seryl-[protein] + H2O = L-seryl-[protein] + phosphate. It catalyses the reaction O-phospho-L-threonyl-[protein] + H2O = L-threonyl-[protein] + phosphate. The sequence is that of Probable protein phosphatase 2C 71 from Oryza sativa subsp. japonica (Rice).